The chain runs to 546 residues: ATP synthase F(1) complex catalytic subunit beta, mitochondrial (546 aa).

A mitochondrion-targeting transit peptide spans 1-45 (MLGFVGRVAATSASGALRGLGPSPLPQVKVLLRASPAALQSARDY). Lys-123, Lys-132, and Lys-160 each carry N6-acetyllysine; alternate. N6-succinyllysine; alternate occurs at positions 123, 132, and 160. Position 197 is an N6-acetyllysine (Lys-197). ADP-binding residues include Gly-208, Val-209, Gly-210, Lys-211, Thr-212, and Val-213. Residue Gly-208 coordinates ATP. 5 residues coordinate phosphate: Gly-208, Val-209, Gly-210, Lys-211, and Thr-212. ATP-binding residues include Gly-210, Lys-211, Thr-212, and Val-213. Thr-212 is a binding site for Mg(2+). A Mg(2+)-binding site is contributed by Glu-237. Residue Arg-238 participates in ATP binding. 2 positions are modified to N6-acetyllysine; alternate: Lys-258 and Lys-263. N6-succinyllysine; alternate is present on residues Lys-258 and Lys-263. Phosphothreonine is present on Thr-311. Lys-425 bears the N6-acetyllysine mark. Position 432 is a phosphoserine (Ser-432). 2 positions are modified to N6-acetyllysine: Lys-479 and Lys-484. Lys-521 is modified (N6-acetyllysine; alternate). Residue Lys-521 is modified to N6-succinyllysine; alternate. Residues 521 to 546 (KLAEEHSATQTSPSPKGAAAXXXRVV) are disordered.

The protein belongs to the ATPase alpha/beta chains family. In terms of assembly, homotrimer. Component of the ATP synthase complex composed at least of ATP5F1A/subunit alpha, ATP5F1B/subunit beta, ATP5MC1/subunit c (homooctomer), MT-ATP6/subunit a, MT-ATP8/subunit 8, ATP5ME/subunit e, ATP5MF/subunit f, ATP5MG/subunit g, ATP5MK/subunit k, ATP5MJ/subunit j, ATP5F1C/subunit gamma, ATP5F1D/subunit delta, ATP5F1E/subunit epsilon, ATP5PF/subunit F6, ATP5PB/subunit b, ATP5PD/subunit d, ATP5PO/subunit OSCP. ATP synthase complex consists of a soluble F(1) head domain (subunits alpha(3) and beta(3)) - the catalytic core - and a membrane F(0) domain - the membrane proton channel (subunits c, a, 8, e, f, g, k and j). These two domains are linked by a central stalk (subunits gamma, delta, and epsilon) rotating inside the F1 region and a stationary peripheral stalk (subunits F6, b, d, and OSCP). Interacts with PPIF. Interacts with BCL2L1 isoform BCL-X(L); the interaction mediates the association of BCL2L1 isoform BCL-X(L) with the mitochondrial membrane F(1)F(0) ATP synthase and enhances neurons metabolic efficiency. Interacts with CLN5 and PPT1. Interacts with S100A1; this interaction increases F1-ATPase activity. Interacts with MTLN. Interacts with TTC5/STRAP; the interaction results in decreased mitochondrial ATP production.

It is found in the mitochondrion inner membrane. It carries out the reaction ATP + H2O + 4 H(+)(in) = ADP + phosphate + 5 H(+)(out). Functionally, catalytic subunit beta, of the mitochondrial membrane ATP synthase complex (F(1)F(0) ATP synthase or Complex V) that produces ATP from ADP in the presence of a proton gradient across the membrane which is generated by electron transport complexes of the respiratory chain. ATP synthase complex consist of a soluble F(1) head domain - the catalytic core - and a membrane F(1) domain - the membrane proton channel. These two domains are linked by a central stalk rotating inside the F(1) region and a stationary peripheral stalk. During catalysis, ATP synthesis in the catalytic domain of F(1) is coupled via a rotary mechanism of the central stalk subunits to proton translocation. In vivo, can only synthesize ATP although its ATP hydrolase activity can be activated artificially in vitro. With the subunit alpha (ATP5F1A), forms the catalytic core in the F(1) domain. This chain is ATP synthase F(1) complex catalytic subunit beta, mitochondrial, found in Canis lupus familiaris (Dog).